A 426-amino-acid chain; its full sequence is Casein kinase I (426 aa).

In terms of domain architecture, Protein kinase spans 9 to 278; sequence YRISRKIGGG…LRKLLREMFV (270 aa). Residues 15–23 and Lys38 contribute to the ATP site; that span reads IGGGSFGEI. The active-site Proton acceptor is Asp128. Disordered stretches follow at residues 340 to 360 and 377 to 426; these read TTTT…TVSN and PSYN…PPAK. A compositionally biased stretch (polar residues) spans 345–360; it reads SSSQPSNVKNISTVSN. The span at 386–404 shows a compositional bias: low complexity; it reads QSPQQTTTTTSSSNPNQTT. The span at 414–426 shows a compositional bias: polar residues; that stretch reads PQSSSTTTKPPAK.

This sequence belongs to the protein kinase superfamily. CK1 Ser/Thr protein kinase family. Casein kinase I subfamily. As to quaternary structure, monomer. In terms of processing, autophosphorylated.

The protein resides in the cytoplasm. It is found in the nucleus. The catalysed reaction is L-seryl-[protein] + ATP = O-phospho-L-seryl-[protein] + ADP + H(+). It carries out the reaction L-threonyl-[protein] + ATP = O-phospho-L-threonyl-[protein] + ADP + H(+). Its function is as follows. Casein kinases are operationally defined by their preferential utilization of acidic proteins such as caseins as substrates. Can phosphorylate a large number of proteins. May have a role in DNA repair mechanism and support vegetative growth of the cells. This Dictyostelium discoideum (Social amoeba) protein is Casein kinase I (cak1-1).